The following is a 400-amino-acid chain: 2'-5'-oligoadenylate synthase 1 (400 aa).

The interval 13–60 (DKFIEDYLLPDTCFRMQINHAIDIICGFLKERCFRGSSYPVCVSKVVK) is interaction with dsRNA. Serine 63 is an ATP binding site. Residues aspartate 75, aspartate 77, and aspartate 148 each coordinate Mg(2+). The interval 200–210 (QRPTKLKSLIR) is interaction with dsRNA. 3 residues coordinate ATP: arginine 210, lysine 213, and glutamine 229. Cysteine 397 carries S-geranylgeranyl cysteine lipidation.

Belongs to the 2-5A synthase family. As to quaternary structure, monomer. Homotetramer. It depends on Mg(2+) as a cofactor. In terms of processing, prenylated at C-terminal. C-terminal prenylation is necessary to initiate a block to SARS-CoV-2 and is associated with protection from severe COVID-1. The prenylated form is targeted to perinuclear structures rich in viral dsRNA, whereas the non-prenylated form is diffusely localized and unable to initiate a detectable block to SARS-CoV-2 replication. C-terminal prenylation is also necessary to initiate a block to cardiovirus EMCV. Post-translationally, not prenylated at C-terminal. The non-prenylated form is diffusely localized and unable to initiate a detectable block to SARS-CoV-2 replication. In terms of tissue distribution, expressed in lungs.

The protein resides in the cytoplasm. It localises to the mitochondrion. It is found in the nucleus. The protein localises to the microsome. Its subcellular location is the endoplasmic reticulum. The protein resides in the secreted. The catalysed reaction is 3 ATP = 5'-triphosphoadenylyl-(2'-&gt;5')-adenylyl-(2'-&gt;5')-adenosine + 2 diphosphate. Its activity is regulated as follows. Produced as a latent enzyme which is activated by dsRNA generated during the course of viral infection. The dsRNA activator must be at least 15 nucleotides long, and no modification of the 2'-hydroxyl group is tolerated. ssRNA or dsDNA do not act as activators. Interferon-induced, dsRNA-activated antiviral enzyme which plays a critical role in cellular innate antiviral response. In addition, it may also play a role in other cellular processes such as apoptosis, cell growth, differentiation and gene regulation. Synthesizes higher oligomers of 2'-5'-oligoadenylates (2-5A) from ATP which then bind to the inactive monomeric form of ribonuclease L (RNase L) leading to its dimerization and subsequent activation. Activation of RNase L leads to degradation of cellular as well as viral RNA, resulting in the inhibition of protein synthesis, thus terminating viral replication. Can mediate the antiviral effect via the classical RNase L-dependent pathway or an alternative antiviral pathway independent of RNase L. The secreted form displays antiviral effect against vesicular stomatitis virus (VSV), herpes simplex virus type 2 (HSV-2), and encephalomyocarditis virus (EMCV) and stimulates the alternative antiviral pathway independent of RNase L. In terms of biological role, when prenylated at C-terminal, acts as a double-stranded RNA (dsRNA) sensor specifically targeted to membranous replicative organelles in SARS coronavirus-2/SARS-CoV-2 infected cells where it binds to dsRNA structures in the SARS-CoV-2 5'-UTR and initiates a potent block to SARS-CoV-2 replication. Recognizes short stretches of dsRNA and activates RNase L. The binding is remarkably specific, with two conserved stem loops in the SARS-CoV-2 5'- untranslated region (UTR) constituting the principal viral target. The same mechanism is necessary to initiate a block to cardiovirus EMCV. Functionally, not prenylated at C-terminal, is diffusely localized and unable to initiate a detectable block to SARS-CoV-2 replication. The sequence is that of 2'-5'-oligoadenylate synthase 1 (OAS1) from Homo sapiens (Human).